A 147-amino-acid polypeptide reads, in one-letter code: Myoglobin (147 aa).

Positions 2–141 (ADHDLVLKCW…VIGDIDGYYK (140 aa)) constitute a Globin domain. H60 lines the nitrite pocket. H60 contributes to the O2 binding site. H89 is a binding site for heme b.

It belongs to the globin family. As to quaternary structure, monomeric.

It is found in the cytoplasm. The protein localises to the sarcoplasm. It catalyses the reaction Fe(III)-heme b-[protein] + nitric oxide + H2O = Fe(II)-heme b-[protein] + nitrite + 2 H(+). The catalysed reaction is H2O2 + AH2 = A + 2 H2O. In terms of biological role, monomeric heme protein which primary function is to store oxygen and facilitate its diffusion within muscle tissues. Reversibly binds oxygen through a pentacoordinated heme iron and enables its timely and efficient release as needed during periods of heightened demand. Depending on the oxidative conditions of tissues and cells, and in addition to its ability to bind oxygen, it also has a nitrite reductase activity whereby it regulates the production of bioactive nitric oxide. Under stress conditions, like hypoxia and anoxia, it also protects cells against reactive oxygen species thanks to its pseudoperoxidase activity. This is Myoglobin (mb) from Danio rerio (Zebrafish).